A 548-amino-acid chain; its full sequence is Aromatic ammonia-lyase (548 aa).

Tyr-55 functions as the Proton donor/acceptor in the catalytic mechanism. A cross-link (5-imidazolinone (Ala-Gly)) is located at residues 144–146; that stretch reads ASG. A 2,3-didehydroalanine (Ser) modification is found at Ser-145. The (E)-cinnamate site is built by Asn-200, Gln-288, Arg-294, Asn-324, Lys-396, Glu-425, and Asn-428.

This sequence belongs to the PAL/histidase family. In terms of assembly, homotetramer. In terms of processing, contains an active site 4-methylidene-imidazol-5-one (MIO), which is formed autocatalytically by cyclization and dehydration of residues Ala-Ser-Gly.

It carries out the reaction L-phenylalanine = (E)-cinnamate + NH4(+). It catalyses the reaction L-tyrosine = (E)-4-coumarate + NH4(+). The catalysed reaction is 3,4-dimethoxy-L-phenylalanine = 3,4-dimethoxy-(E)-cinnamate + NH4(+). The protein operates within phenylpropanoid metabolism; trans-cinnamate biosynthesis; trans-cinnamate from L-phenylalanine: step 1/1. Its function is as follows. Aromatic ammonia-lyase (AAL) that shows reduced activity to catalyze the non-oxidative ammonia elimination from the canonical AAL substrates L-Phe and L-Tyr, contrasted by its pronounced efficiency towards substrates with electron-donor aromatic substituents such as 3,4-dimethoxy-L-phenylalanine. Is also able to catalyze the reverse reaction in vitro, i.e. the ammonia addition reaction to cinnamate derivatives, producing enantiopure phenylalanine derivatives. Shows no activity with L-His. The protein is Aromatic ammonia-lyase of Loktanella atrilutea.